Here is a 231-residue protein sequence, read N- to C-terminus: Thermonuclease (231 aa).

The N-terminal stretch at 1 to 26 (MLVMTEYLLSAGICMAIVSILLIGMA) is a signal peptide. 2 propeptides span residues 27 to 63 (ISNV…SANA) and 64 to 82 (SQTD…TVYS). A compositionally biased stretch (polar residues) spans 61 to 73 (ANASQTDNGVNRS). The segment at 61-86 (ANASQTDNGVNRSGSEDPTVYSATST) is disordered. Residue D103 participates in Ca(2+) binding. The active site involves R117. D122 and T123 together coordinate Ca(2+). Residues E125 and R169 contribute to the active site. The span at 203–219 (HEQHLRKSEAQAKKEKL) shows a compositional bias: basic and acidic residues. A disordered region spans residues 203–231 (HEQHLRKSEAQAKKEKLNIWSEDNADSGQ).

It belongs to the thermonuclease family. Ca(2+) serves as cofactor.

The protein resides in the secreted. It is found in the membrane. The catalysed reaction is Endonucleolytic cleavage to nucleoside 3'-phosphates and 3'-phosphooligonucleotide end-products.. Its function is as follows. Enzyme that catalyzes the hydrolysis of both DNA and RNA at the 5' position of the phosphodiester bond. The polypeptide is Thermonuclease (Staphylococcus aureus).